A 739-amino-acid polypeptide reads, in one-letter code: Glycine--tRNA ligase (739 aa).

Residues 1 to 36 constitute a mitochondrion transit peptide; that stretch reads MPSPRPVLLRGARAALLLLLPPRLLARPSLLLRRSL. Position 35 is a phosphoserine (Ser-35). Residues 63-119 form the WHEP-TRS domain; sequence VLAPLRLAVRQQGDLVRKLKEDKAPQVDVDKAVAELKARKRVLEAKELALQPKDDIV. At Lys-204 the chain carries N6-acetyllysine. Residue Glu-299 coordinates glycine. ATP is bound by residues 331 to 333 and 342 to 343; these read RNE and RV. Residue Glu-350 coordinates glycine. The residue at position 453 (Tyr-453) is a Phosphotyrosine. 457–458 is an ATP binding site; that stretch reads EI. Lys-501 carries the N6-acetyllysine modification. 576–578 provides a ligand contact to glycine; sequence EPS. Arg-583 contributes to the ATP binding site. Position 700 is a phosphoserine (Ser-700). Thr-736 is modified (phosphothreonine).

This sequence belongs to the class-II aminoacyl-tRNA synthetase family. Homodimer. As to expression, widely expressed, including in brain and spinal cord. In terms of tissue distribution, expressed in brain, spinal cord, muscle, heart and spleen. Expressed in brain, spinal cord, muscle, heart, spleen and liver.

It localises to the cytoplasm. Its subcellular location is the cell projection. The protein resides in the axon. It is found in the secreted. The protein localises to the extracellular exosome. It localises to the mitochondrion. The enzyme catalyses tRNA(Gly) + glycine + ATP = glycyl-tRNA(Gly) + AMP + diphosphate. It carries out the reaction 2 ATP + H(+) = P(1),P(4)-bis(5'-adenosyl) tetraphosphate + diphosphate. With respect to regulation, ap4A synthesis is inhibited by tRNA, via the disruption of the second ATP-binding site by direct blocking and/or by tRNA-induced conformational change. In terms of biological role, catalyzes the ATP-dependent ligation of glycine to the 3'-end of its cognate tRNA, via the formation of an aminoacyl-adenylate intermediate (Gly-AMP). Also produces diadenosine tetraphosphate (Ap4A), a universal pleiotropic signaling molecule needed for cell regulation pathways, by direct condensation of 2 ATPs. Thereby, may play a special role in Ap4A homeostasis. The polypeptide is Glycine--tRNA ligase (Homo sapiens (Human)).